The following is a 65-amino-acid chain: Potassium channel toxin alpha-KTx 12.6 (65 aa).

An N-terminal signal peptide occupies residues 1–22 (MKMKIFIITIVIALFITSIVEA). Intrachain disulfides connect cysteine 30–cysteine 51, cysteine 36–cysteine 56, and cysteine 40–cysteine 58.

This sequence belongs to the short scorpion toxin superfamily. Potassium channel inhibitor family. Alpha-KTx 12 subfamily. Expressed by the venom gland.

Its subcellular location is the secreted. Functionally, inhibits voltage-gated potassium channels. The chain is Potassium channel toxin alpha-KTx 12.6 from Lychas mucronatus (Chinese swimming scorpion).